A 203-amino-acid polypeptide reads, in one-letter code: Small ribosomal subunit protein uS4 (203 aa).

The tract at residues 20 to 44 is disordered; the sequence is LPGLTRKRPKNTNPPGMHGAERKKK. An S4 RNA-binding domain is found at 92–155; the sequence is MRLDCIVFRL…SSRKLVAAYA (64 aa).

It belongs to the universal ribosomal protein uS4 family. As to quaternary structure, part of the 30S ribosomal subunit. Contacts protein S5. The interaction surface between S4 and S5 is involved in control of translational fidelity.

Functionally, one of the primary rRNA binding proteins, it binds directly to 16S rRNA where it nucleates assembly of the body of the 30S subunit. In terms of biological role, with S5 and S12 plays an important role in translational accuracy. The polypeptide is Small ribosomal subunit protein uS4 (Synechococcus sp. (strain JA-2-3B'a(2-13)) (Cyanobacteria bacterium Yellowstone B-Prime)).